The sequence spans 361 residues: tRNA/tmRNA (uracil-C(5))-methyltransferase (361 aa).

Residues Gln185, Tyr213, Asn218, Glu234, and Asp294 each coordinate S-adenosyl-L-methionine. The Nucleophile role is filled by Cys319. The active-site Proton acceptor is the Glu353.

It belongs to the class I-like SAM-binding methyltransferase superfamily. RNA M5U methyltransferase family. TrmA subfamily.

The catalysed reaction is uridine(54) in tRNA + S-adenosyl-L-methionine = 5-methyluridine(54) in tRNA + S-adenosyl-L-homocysteine + H(+). It carries out the reaction uridine(341) in tmRNA + S-adenosyl-L-methionine = 5-methyluridine(341) in tmRNA + S-adenosyl-L-homocysteine + H(+). In terms of biological role, dual-specificity methyltransferase that catalyzes the formation of 5-methyluridine at position 54 (m5U54) in all tRNAs, and that of position 341 (m5U341) in tmRNA (transfer-mRNA). This chain is tRNA/tmRNA (uracil-C(5))-methyltransferase, found in Pseudomonas entomophila (strain L48).